A 312-amino-acid polypeptide reads, in one-letter code: Malate dehydrogenase (312 aa).

NAD(+) contacts are provided by residues 7–13 and D34; that span reads GAAGGIG. Positions 81 and 87 each coordinate substrate. NAD(+)-binding positions include N94 and 117 to 119; that span reads ITN. Substrate-binding residues include N119 and R153. The active-site Proton acceptor is the H177. Position 227 (M227) interacts with NAD(+).

Belongs to the LDH/MDH superfamily. MDH type 1 family. As to quaternary structure, homodimer.

The enzyme catalyses (S)-malate + NAD(+) = oxaloacetate + NADH + H(+). Catalyzes the reversible oxidation of malate to oxaloacetate. In Escherichia coli (strain ATCC 8739 / DSM 1576 / NBRC 3972 / NCIMB 8545 / WDCM 00012 / Crooks), this protein is Malate dehydrogenase.